The following is a 1216-amino-acid chain: Sodium/potassium/calcium exchanger 1 (1216 aa).

The Extracellular portion of the chain corresponds to 1 to 446; it reads MGKLIRMGAQ…DLFSVEERRQ (446 aa). The segment at 94–196 is disordered; that stretch reads EATAGRDGTP…KYSPSPLGRM (103 aa). Polar residues-rich tracts occupy residues 110 to 135 and 144 to 166; these read NTPS…TPTG and SATP…SYTR. N-linked (GlcNAc...) asparagine glycosylation is found at asparagine 290 and asparagine 303. The chain crosses the membrane as a helical span at residues 447–467; the sequence is GWVVLHIFGMMYVFVALAIVC. The Cytoplasmic portion of the chain corresponds to 468 to 491; that stretch reads DEYFVPALGVITDKLQISEDVAGA. The stretch at 488–528 is one Alpha-1 repeat; that stretch reads VAGATFMAAGGSAPELFTSLIGVFISHSNVGIGTIVGSAVF. A helical transmembrane segment spans residues 492-512; that stretch reads TFMAAGGSAPELFTSLIGVFI. Residues 513-518 lie on the Extracellular side of the membrane; it reads SHSNVG. A helical transmembrane segment spans residues 519–539; the sequence is IGTIVGSAVFNILFVIGTCAL. At 540-557 the chain is on the cytoplasmic side; that stretch reads FSREILNLTWWPLFRDIT. Residues 558–578 form a helical membrane-spanning segment; it reads FYIFDLMMLILFFLDSLIAWW. Glutamate 579 is a topological domain (extracellular). A helical membrane pass occupies residues 580-600; the sequence is SVLLLLAYAFYVFTMKWNQQL. Residues 601 to 1024 lie on the Cytoplasmic side of the membrane; that stretch reads ELWVKEQLNK…SLEWPETRRK (424 aa). Serine 652 is modified (phosphoserine). Positions 677 to 1018 are disordered; sequence GEARPSKDKE…ENEQPLSLEW (342 aa). The segment covering 702–712 has biased composition (basic and acidic residues); sequence AESKPEEEPAK. Phosphothreonine is present on threonine 717. The stretch at 796 to 811 is one 1; approximate repeat; the sequence is DEDEGEIQAEGGEVKG. Residues 796-928 are 8 X 17 AA tandem repeats of D-E-D-E-G-E-I-Q-A-G-E-[GA]-G-E-V-[EK]-G; that stretch reads DEDEGEIQAE…QAGEAGEVEG (133 aa). Repeat copies occupy residues 812 to 828, 829 to 845, 846 to 862, 863 to 879, 880 to 896, and 897 to 913. Composition is skewed to acidic residues over residues 824–834, 841–851, 858–868, 875–885, 892–902, 924–941, and 981–1011; these read GEVEGDEDEGE, GEVE…DEGE, and GDSE…EENE. An 8; approximate repeat occupies 914–928; the sequence is DEGEIQAGEAGEVEG. The helical transmembrane segment at 1025–1045 threads the bilayer; that stretch reads QAIYLFLLPIVFPLWLTVPDV. Topologically, residues 1046–1052 are extracellular; sequence RRLEAKK. A helical membrane pass occupies residues 1053-1073; sequence FFVITFLGSILWIAMFSYLMV. Over 1074-1088 the chain is Cytoplasmic; sequence WWAHQVGETIGISEE. Residues 1089–1109 form a helical membrane-spanning segment; the sequence is IMGLTILAAGTSIPDLITSVI. The Alpha-2 repeat unit spans residues 1096–1127; that stretch reads AAGTSIPDLITSVIVARKGLGDMAVSSSVGSN. Residues 1110-1127 lie on the Extracellular side of the membrane; that stretch reads VARKGLGDMAVSSSVGSN. A helical membrane pass occupies residues 1128 to 1148; that stretch reads IFDITVGLPLPWMLFSLINGL. The Cytoplasmic portion of the chain corresponds to 1149–1157; sequence QPVAVSSNG. A helical transmembrane segment spans residues 1158-1178; it reads LFCAIVLLFLMLLFVISSIAL. At 1179 to 1185 the chain is on the extracellular side; it reads CKWRMNK. Residues 1186–1206 traverse the membrane as a helical segment; it reads ILGFTMFLLYFVFLIISVMLE. The Cytoplasmic segment spans residues 1207–1216; the sequence is DRIISCPVSV.

Belongs to the Ca(2+):cation antiporter (CaCA) (TC 2.A.19) family. SLC24A subfamily. Post-translationally, the uncleaved signal sequence is required for efficient membrane targeting and proper membrane integration and topology. Glycosylated. Retina.

The protein resides in the cell membrane. The enzyme catalyses Ca(2+)(out) + K(+)(out) + 4 Na(+)(in) = Ca(2+)(in) + K(+)(in) + 4 Na(+)(out). Functionally, calcium, potassium:sodium antiporter that transports 1 Ca(2+) and 1 K(+) in exchange for 4 Na(+). Critical component of the visual transduction cascade, controlling the calcium concentration of outer segments during light and darkness. Light causes a rapid lowering of cytosolic free calcium in the outer segment of both retinal rod and cone photoreceptors and the light-induced lowering of calcium is caused by extrusion via this protein which plays a key role in the process of light adaptation. The protein is Sodium/potassium/calcium exchanger 1 (SLC24A1) of Bos taurus (Bovine).